Reading from the N-terminus, the 66-residue chain is Stress-associated endoplasmic reticulum protein 1 (66 aa).

The tract at residues methionine 1–alanine 31 is disordered. Residues asparagine 17–asparagine 30 show a composition bias toward polar residues. The helical transmembrane segment at glycine 39 to isoleucine 59 threads the bilayer.

The protein belongs to the RAMP4 family. In terms of assembly, interacts with SEC61B, SEC61A1 and the SEC61 complex. Interacts with CANX.

The protein localises to the membrane. It is found in the endoplasmic reticulum membrane. Its function is as follows. Interacts with target proteins during their translocation into the lumen of the endoplasmic reticulum. Protects unfolded target proteins against degradation during ER stress. May facilitate glycosylation of target proteins after termination of ER stress. May modulate the use of N-glycosylation sites on target proteins. This Bos taurus (Bovine) protein is Stress-associated endoplasmic reticulum protein 1 (SERP1).